The sequence spans 339 residues: D-erythrose-4-phosphate dehydrogenase (339 aa).

Residue 11–12 (RI) coordinates NAD(+). Residues 158–160 (SCT), arginine 204, 217–218 (TK), and arginine 240 each bind substrate. Cysteine 159 serves as the catalytic Nucleophile. NAD(+) is bound at residue asparagine 322.

Belongs to the glyceraldehyde-3-phosphate dehydrogenase family. Epd subfamily. Homotetramer.

It localises to the cytoplasm. The enzyme catalyses D-erythrose 4-phosphate + NAD(+) + H2O = 4-phospho-D-erythronate + NADH + 2 H(+). It functions in the pathway cofactor biosynthesis; pyridoxine 5'-phosphate biosynthesis; pyridoxine 5'-phosphate from D-erythrose 4-phosphate: step 1/5. Catalyzes the NAD-dependent conversion of D-erythrose 4-phosphate to 4-phosphoerythronate. The protein is D-erythrose-4-phosphate dehydrogenase of Aliivibrio fischeri (strain MJ11) (Vibrio fischeri).